The chain runs to 71 residues: Calcium dodecin (71 aa).

E18 is a Ca(2+) binding site.

The protein belongs to the dodecin family. As to quaternary structure, homododecamer; 12 subunits assemble to form a hollow sphere with a diameter of about 75 Angstroms. Calcium ions are bound at the interface between three subunits.

Binds calcium ions. May play a role in sequestering additional small ligands. In Mycobacterium tuberculosis (strain ATCC 25618 / H37Rv), this protein is Calcium dodecin (secE2).